A 182-amino-acid polypeptide reads, in one-letter code: Ribosome-recycling factor (182 aa).

Residues 137-158 are disordered; it reads KKSEKESEISEDQSRDEQDNVQ.

It belongs to the RRF family.

Its subcellular location is the cytoplasm. Its function is as follows. Responsible for the release of ribosomes from messenger RNA at the termination of protein biosynthesis. May increase the efficiency of translation by recycling ribosomes from one round of translation to another. In Prochlorococcus marinus (strain MIT 9211), this protein is Ribosome-recycling factor.